An 86-amino-acid polypeptide reads, in one-letter code: U13-theraphotoxin-Cg1b (86 aa).

Positions M1–A21 are cleaved as a signal peptide. Residues A22 to E51 constitute a propeptide that is removed on maturation. 3 disulfides stabilise this stretch: C52–C66, C59–C71, and C65–C78.

The protein belongs to the neurotoxin 10 (Hwtx-1) family. 41 (Jztx-36) subfamily. As to expression, expressed by the venom gland.

Its subcellular location is the secreted. Probable ion channel inhibitor. This chain is U13-theraphotoxin-Cg1b, found in Chilobrachys guangxiensis (Chinese earth tiger tarantula).